Here is an 810-residue protein sequence, read N- to C-terminus: LPS-assembly protein LptD (810 aa).

The first 29 residues, 1-29, serve as a signal peptide directing secretion; it reads MTKWTLGYSYPIALTISLIPALTPAIVQA.

It belongs to the LptD family. Component of the lipopolysaccharide transport and assembly complex. Interacts with LptE and LptA.

It is found in the cell outer membrane. Its function is as follows. Together with LptE, is involved in the assembly of lipopolysaccharide (LPS) at the surface of the outer membrane. In Aeromonas salmonicida (strain A449), this protein is LPS-assembly protein LptD.